A 724-amino-acid polypeptide reads, in one-letter code: Probable metal-nicotianamine transporter YSL8 (724 aa).

Positions 1–58 (MRKGGLTPDRDRQIEEHELQETGISPDIERLKRNINATPYQREEEEEDREEQEESVEG) are disordered. The segment covering 8–20 (PDRDRQIEEHELQ) has biased composition (basic and acidic residues). At Ser25 the chain carries Phosphoserine. Acidic residues predominate over residues 43-56 (EEEEEDREEQEESV). 7 helical membrane passes run 72–92 (LTIR…FIVM), 96–116 (LTTG…FFFV), 144–164 (CVVA…LFAM), 184–204 (LGWM…SVVP), 245–265 (VLGK…FFTA), 304–324 (IINI…WPLI), and 349–369 (VFIA…KVLI). The segment at 386–407 (RSSLAHKEDPPASPASPLTPRI) is disordered. Helical transmembrane passes span 423–443 (IPSW…TAIL), 455–475 (IIVI…GAGL), 478–497 (WSLA…AWAG), 501–520 (GGLL…VSTA), 541–561 (FVSQ…VFWL), 603–623 (LMLC…KDCL), 641–661 (FFLG…LFVW), and 679–699 (GLIC…IAGV).

The protein belongs to the YSL (TC 2.A.67.2) family.

The protein resides in the membrane. Functionally, may be involved in the transport of nicotianamine-chelated metals. This chain is Probable metal-nicotianamine transporter YSL8 (YSL8), found in Arabidopsis thaliana (Mouse-ear cress).